The sequence spans 522 residues: MNRTFSLRRKVKKSEISTPSNFEHRIHAGFDARSGTYTGLPKQWQALLGPPRSISRPKPMVDPSCITPVDVAELKTVIRGPSSSFRYNSPLPFGMTNSPMPSVARSNSLRISATASPVVNVSSARHSFRPTLPPVSQRGYPFNDPSYAPLPLRNQKPPMSTTFGVEKPHQYQQIITIVAPSRTTTPQLQPKSPSTPQAMRQQPKCTEGVSDEEFRNALKFVVDGTDPRSDLTDYKQIGEGSTGVVEAAYKISTKQIVAVKRMNLRKQQRRELLFNEVSILRQYQHPNIVRFFSSHLVDDELWVVMEFMEGGSLTDIVTATRMTEPQIATISRQVLGALDFLHARKVIHRDIKSDSILLKRDGTVKLTDFGFCGQLSEEVPRRRSLVGTPYWTAAEVIAREPYDTRADIWSFGIMLIEMVEGEPPFFNDQPFQAMKRIRDEHEARFSRHAKVSVELSELLSHCIVKDVNKRWPAKDLLRHPFFAKAQHSSSIAPLLLQLQGNTINGNNPPTHHHSSQITTVIQ.

In terms of domain architecture, CRIB spans 16 to 29 (ISTPSNFEHRIHAG). Polar residues predominate over residues 183-204 (TTTPQLQPKSPSTPQAMRQQPK). A disordered region spans residues 183–208 (TTTPQLQPKSPSTPQAMRQQPKCTEG). A Protein kinase domain is found at 231–482 (LTDYKQIGEG…AKDLLRHPFF (252 aa)). Residues 237–245 (IGEGSTGVV) and K260 each bind ATP. D350 (proton acceptor) is an active-site residue.

It belongs to the protein kinase superfamily. STE Ser/Thr protein kinase family. STE20 subfamily. Requires Mg(2+) as cofactor. Mn(2+) serves as cofactor. In terms of tissue distribution, expressed in pharynx, vulva and spermatheca. Unlike other p21-activated kinases, expression is not detected in neurons.

The catalysed reaction is L-seryl-[protein] + ATP = O-phospho-L-seryl-[protein] + ADP + H(+). It catalyses the reaction L-threonyl-[protein] + ATP = O-phospho-L-threonyl-[protein] + ADP + H(+). Serine/threonine-protein kinase which plays a redundant role with pak-1 in embryogenesis but, in contrast to pak-1, is not involved in commissural axon guidance of ventral cord motoneurons or in distal tip cell (DTC) migration. The protein is Serine/threonine-protein kinase pak-2 of Caenorhabditis elegans.